Consider the following 362-residue polypeptide: Carbamoyl phosphate synthase pyrimidine-specific small chain (362 aa).

A CPSase region spans residues 1 to 168 (MKRQLILEDG…TRDPYHVPGP (168 aa)). L-glutamine-binding residues include Ser45, Gly219, and Gly221. Residues 171–358 (RVVLVDYGMK…IKLMESNKHR (188 aa)) form the Glutamine amidotransferase type-1 domain. Cys246 acts as the Nucleophile in catalysis. Positions 247, 250, 288, 290, and 291 each coordinate L-glutamine. Catalysis depends on residues His331 and Glu333.

Belongs to the CarA family. As to quaternary structure, composed of two chains; the small (or glutamine) chain promotes the hydrolysis of glutamine to ammonia, which is used by the large (or ammonia) chain to synthesize carbamoyl phosphate. Tetramer of heterodimers (alpha,beta)4.

The catalysed reaction is hydrogencarbonate + L-glutamine + 2 ATP + H2O = carbamoyl phosphate + L-glutamate + 2 ADP + phosphate + 2 H(+). It catalyses the reaction L-glutamine + H2O = L-glutamate + NH4(+). It functions in the pathway pyrimidine metabolism; UMP biosynthesis via de novo pathway; (S)-dihydroorotate from bicarbonate: step 1/3. Small subunit of the glutamine-dependent carbamoyl phosphate synthetase (CPSase). CPSase catalyzes the formation of carbamoyl phosphate from the ammonia moiety of glutamine, carbonate, and phosphate donated by ATP, constituting the first step of the biosynthetic pathway leading to pyrimidine nucleotides. The small subunit (glutamine amidotransferase) binds and cleaves glutamine to supply the large subunit with the substrate ammonia. The chain is Carbamoyl phosphate synthase pyrimidine-specific small chain from Halalkalibacterium halodurans (strain ATCC BAA-125 / DSM 18197 / FERM 7344 / JCM 9153 / C-125) (Bacillus halodurans).